The sequence spans 104 residues: Urease subunit beta (104 aa).

The protein belongs to the urease beta subunit family. As to quaternary structure, heterotrimer of UreA (gamma), UreB (beta) and UreC (alpha) subunits. Three heterotrimers associate to form the active enzyme.

The protein resides in the cytoplasm. The catalysed reaction is urea + 2 H2O + H(+) = hydrogencarbonate + 2 NH4(+). The protein operates within nitrogen metabolism; urea degradation; CO(2) and NH(3) from urea (urease route): step 1/1. This is Urease subunit beta from Rhodopseudomonas palustris (strain BisB18).